We begin with the raw amino-acid sequence, 176 residues long: Crossover junction endodeoxyribonuclease RuvC (176 aa).

Residues Asp-9, Glu-69, and Asp-141 contribute to the active site. Mg(2+) contacts are provided by Asp-9, Glu-69, and Asp-141.

It belongs to the RuvC family. Homodimer which binds Holliday junction (HJ) DNA. The HJ becomes 2-fold symmetrical on binding to RuvC with unstacked arms; it has a different conformation from HJ DNA in complex with RuvA. In the full resolvosome a probable DNA-RuvA(4)-RuvB(12)-RuvC(2) complex forms which resolves the HJ. Mg(2+) is required as a cofactor.

Its subcellular location is the cytoplasm. It catalyses the reaction Endonucleolytic cleavage at a junction such as a reciprocal single-stranded crossover between two homologous DNA duplexes (Holliday junction).. Its function is as follows. The RuvA-RuvB-RuvC complex processes Holliday junction (HJ) DNA during genetic recombination and DNA repair. Endonuclease that resolves HJ intermediates. Cleaves cruciform DNA by making single-stranded nicks across the HJ at symmetrical positions within the homologous arms, yielding a 5'-phosphate and a 3'-hydroxyl group; requires a central core of homology in the junction. The consensus cleavage sequence is 5'-(A/T)TT(C/G)-3'. Cleavage occurs on the 3'-side of the TT dinucleotide at the point of strand exchange. HJ branch migration catalyzed by RuvA-RuvB allows RuvC to scan DNA until it finds its consensus sequence, where it cleaves and resolves the cruciform DNA. This is Crossover junction endodeoxyribonuclease RuvC from Chromobacterium violaceum (strain ATCC 12472 / DSM 30191 / JCM 1249 / CCUG 213 / NBRC 12614 / NCIMB 9131 / NCTC 9757 / MK).